Here is a 147-residue protein sequence, read N- to C-terminus: Prefoldin subunit alpha (147 aa).

The protein belongs to the prefoldin alpha subunit family. Heterohexamer of two alpha and four beta subunits.

Its subcellular location is the cytoplasm. Its function is as follows. Molecular chaperone capable of stabilizing a range of proteins. Seems to fulfill an ATP-independent, HSP70-like function in archaeal de novo protein folding. The chain is Prefoldin subunit alpha from Saccharolobus islandicus (strain M.16.27) (Sulfolobus islandicus).